The chain runs to 495 residues: MSNIRVRFAPSPTGALHMGGARTALFNWLFARQNGGKFILRIEDTDFRRSREDSAQGIVEGLSWLGLDWDEGPDIGGPLGPYRQSERGDIYSRYLQELLDSGQAYYCFCSPEDLQKEREEAAQEKRDYKYGGRCKALKPEEASEMLQAGKPAVIRLKVPLDGNTVVPDLIRGDVSFSNALFDDFIIAKSDGWPTYNFAVVVDDFSMQISHVLRAEEHLSNTPRQLLIYRALGLKEPAFAHLSMILAPDRSKLSKRHGAISVQEFENQGYLPEALVNYLALLGWSTGKDIDIWSREEMMREFSLEHISKSPAIYDLEKLAWMNGQYMMRLDIESLMALVEPQAQQQGWLNEDNFDYFQQAVELVRNRAKTRDELLDALGYFFEEVKQYDEKGVKKHFGQQKASTMLSEVLEIVSNMGSFSAAELEEAFRQRAQELKIKAADLIHPTRLALSGRTATPGLFELMEVLGQEKCISRLEKALDFIAKLTTHGPEGHNHR.

Positions 10-20 match the 'HIGH' region motif; the sequence is PSPTGALHMGG. A 'KMSKS' region motif is present at residues 251 to 255; the sequence is KLSKR. Lys254 is a binding site for ATP.

Belongs to the class-I aminoacyl-tRNA synthetase family. Glutamate--tRNA ligase type 1 subfamily. As to quaternary structure, monomer.

The protein resides in the cytoplasm. It catalyses the reaction tRNA(Glu) + L-glutamate + ATP = L-glutamyl-tRNA(Glu) + AMP + diphosphate. In terms of biological role, catalyzes the attachment of glutamate to tRNA(Glu) in a two-step reaction: glutamate is first activated by ATP to form Glu-AMP and then transferred to the acceptor end of tRNA(Glu). The protein is Glutamate--tRNA ligase 1 of Syntrophomonas wolfei subsp. wolfei (strain DSM 2245B / Goettingen).